The following is a 484-amino-acid chain: Sushi domain-containing protein 4 (484 aa).

Residues 1–35 (MFHHADKGGKKSAFGHPVCGQIILSIILLRPPLLV) form the signal peptide. 4 consecutive Sushi domains span residues 46 to 110 (QICK…VCLS), 111 to 168 (EDCL…QPTC), 169 to 230 (QGCL…RCLD), and 232 to 295 (EACS…YCVK). Disulfide bonds link Cys-48–Cys-90, Cys-76–Cys-108, Cys-113–Cys-156, Cys-138–Cys-168, Cys-171–Cys-215, Cys-201–Cys-228, Cys-234–Cys-280, and Cys-265–Cys-293. Residues Asn-95 and Asn-125 are each glycosylated (N-linked (GlcNAc...) asparagine). Asn-183 carries N-linked (GlcNAc...) asparagine glycosylation. Residues 311–331 (WKVVACTATSVLLALLLVITA) traverse the membrane as a helical segment. A disordered region spans residues 374–484 (SGNYCQPPND…PLVEDGEEDC (111 aa)). Polar residues-rich tracts occupy residues 424-442 (DSLS…SSSH) and 449-467 (SEKT…TSPS). Residues 470–484 (IADEIPLVEDGEEDC) show a composition bias toward acidic residues.

It is found in the membrane. This Danio rerio (Zebrafish) protein is Sushi domain-containing protein 4 (susd4).